We begin with the raw amino-acid sequence, 873 residues long: Alanine--tRNA ligase (873 aa).

Zn(2+)-binding residues include His-562, His-566, Cys-664, and His-668.

The protein belongs to the class-II aminoacyl-tRNA synthetase family. Zn(2+) serves as cofactor.

The protein resides in the cytoplasm. The catalysed reaction is tRNA(Ala) + L-alanine + ATP = L-alanyl-tRNA(Ala) + AMP + diphosphate. Catalyzes the attachment of alanine to tRNA(Ala) in a two-step reaction: alanine is first activated by ATP to form Ala-AMP and then transferred to the acceptor end of tRNA(Ala). Also edits incorrectly charged Ser-tRNA(Ala) and Gly-tRNA(Ala) via its editing domain. The protein is Alanine--tRNA ligase of Photobacterium profundum (strain SS9).